Here is a 430-residue protein sequence, read N- to C-terminus: UPF0597 protein BDI_1130 (430 aa).

It belongs to the UPF0597 family.

In Parabacteroides distasonis (strain ATCC 8503 / DSM 20701 / CIP 104284 / JCM 5825 / NCTC 11152), this protein is UPF0597 protein BDI_1130.